We begin with the raw amino-acid sequence, 156 residues long: Small ribosomal subunit protein uS7 (156 aa).

It belongs to the universal ribosomal protein uS7 family. In terms of assembly, part of the 30S ribosomal subunit. Contacts proteins S9 and S11.

In terms of biological role, one of the primary rRNA binding proteins, it binds directly to 16S rRNA where it nucleates assembly of the head domain of the 30S subunit. Is located at the subunit interface close to the decoding center, probably blocks exit of the E-site tRNA. This Alkaliphilus metalliredigens (strain QYMF) protein is Small ribosomal subunit protein uS7.